The primary structure comprises 230 residues: MKNLEALLKSSFAIEFEDKTLLETAFTHTSYANEHRLLNISHNERLEFLGDAVLQLIISEYLFKKYPHKAEGELSKQRSMIVREESLASFSRHCAFEPYIKLGKGEEKSGGRNRDTILGDLFEAFLGALLLDKGVEEVRRFLNQVMIPQVEKGNFEKVNDYKTSLQEILQAKGDTIIDYKVINESGPAHAKQFEVVVLANQVELSKGIGRSKKLAEQNAAENALKALSEE.

The region spanning 5 to 134 (EALLKSSFAI…FLGALLLDKG (130 aa)) is the RNase III domain. E47 is a binding site for Mg(2+). The active site involves D51. Positions 120 and 123 each coordinate Mg(2+). E123 is an active-site residue. Residues 160–229 (DYKTSLQEIL…AENALKALSE (70 aa)) enclose the DRBM domain.

Belongs to the ribonuclease III family. Homodimer. The cofactor is Mg(2+).

Its subcellular location is the cytoplasm. It carries out the reaction Endonucleolytic cleavage to 5'-phosphomonoester.. Its function is as follows. Digests double-stranded RNA. Involved in the processing of primary rRNA transcript to yield the immediate precursors to the large and small rRNAs (23S and 16S). Processes some mRNAs, and tRNAs when they are encoded in the rRNA operon. Processes pre-crRNA and tracrRNA of type II CRISPR loci if present in the organism. In Streptococcus uberis (strain ATCC BAA-854 / 0140J), this protein is Ribonuclease 3.